The following is a 113-amino-acid chain: Histone H3-8 (113 aa).

Residues 1–17 (NTGAKAPRKHLANKAAR) show a composition bias toward basic residues. The interval 1-31 (NTGAKAPRKHLANKAARKTAAPANAGIKKPH) is disordered.

It belongs to the histone H3 family. The nucleosome is a histone octamer containing two molecules each of H2A, H2B, H3 and H4 assembled in one H3-H4 heterotetramer and two H2A-H2B heterodimers. The octamer wraps approximately 147 bp of DNA.

The protein localises to the nucleus. Its subcellular location is the chromosome. Core component of nucleosome. Nucleosomes wrap and compact DNA into chromatin, limiting DNA accessibility to the cellular machineries which require DNA as a template. Histones thereby play a central role in transcription regulation, DNA repair, DNA replication and chromosomal stability. DNA accessibility is regulated via a complex set of post-translational modifications of histones, also called histone code, and nucleosome remodeling. In Stylonychia lemnae (Ciliate), this protein is Histone H3-8 (H3-8).